A 641-amino-acid polypeptide reads, in one-letter code: Fructose-1,6-bisphosphatase class 3 (641 aa).

It belongs to the FBPase class 3 family. Requires Mn(2+) as cofactor.

It catalyses the reaction beta-D-fructose 1,6-bisphosphate + H2O = beta-D-fructose 6-phosphate + phosphate. Its pathway is carbohydrate biosynthesis; gluconeogenesis. This Bacillus velezensis (strain DSM 23117 / BGSC 10A6 / LMG 26770 / FZB42) (Bacillus amyloliquefaciens subsp. plantarum) protein is Fructose-1,6-bisphosphatase class 3.